The primary structure comprises 350 residues: NAD-dependent protein deacetylase sirtuin-2 (350 aa).

The Nuclear export signal signature appears at 4–14; the sequence is LRNLFTQTLGL. Phosphoserine is present on Ser16. Residues 20 to 301 enclose the Deacetylase sirtuin-type domain; that stretch reads RLLDELTLEG…LALADLLGWK (282 aa). Residues 48–52 and 58–60 contribute to the NAD(+) site; these read AGIST and DFR. Ser63 carries the post-translational modification Phosphoserine. 130-133 is a binding site for NAD(+); that stretch reads QNID. Catalysis depends on His150, which acts as the Proton acceptor. 2 residues coordinate Zn(2+): Cys158 and Cys163. Position 170 is a phosphoserine (Ser170). Positions 184 and 187 each coordinate Zn(2+). NAD(+) is bound by residues 225-226, 249-251, and Cys287; these read TS and NKE. Residues 312-350 are disordered; it reads ANIDAQSGSQASNPSATVSPRKSPPPAKEAARTKEKEEH. The span at 315-331 shows a compositional bias: polar residues; that stretch reads DAQSGSQASNPSATVSP. 2 positions are modified to phosphoserine: Ser330 and Ser334. Residues 340–350 show a composition bias toward basic and acidic residues; that stretch reads EAARTKEKEEH.

Belongs to the sirtuin family. Class I subfamily. In terms of assembly, interacts with CDC20, FOXO3 and FZR1. Associates with microtubules in primary cortical mature neurons. Homotrimer. Interacts (via both phosphorylated, unphosphorylated, active or inactive forms) with HDAC6; the interaction is necessary for the complex to interact with alpha-tubulin, suggesting that these proteins belong to a large complex that deacetylates the cytoskeleton. Interacts with FOXO1; the interaction is disrupted upon serum-starvation or oxidative stress, leading to increased level of acetylated FOXO1 and induction of autophagy. Interacts with RELA; the interaction occurs in the cytoplasm and is increased in a TNF-alpha-dependent manner. Interacts with HOXA10; the interaction is direct. Interacts with YWHAB and YWHAG; the interactions occur in a AKT-dependent manner and increase SIRT2-dependent TP53 deacetylation. Interacts with MAPK1/ERK2 and MAPK3/ERK1; the interactions increase SIRT2 stability and deacetylation activity. Interacts (phosphorylated form) with KMT5A isoform 2; the interaction is direct, stimulates KMT5A-mediated methyltransferase activity on histone at 'Lys-20' (H4K20me1) and is increased in a H(2)O(2)-induced oxidative stress-dependent manner. Interacts with G6PD; the interaction is enhanced by H(2)O(2) treatment. Interacts with a G1/S-specific cyclin E-CDK2 complex. Interacts with AURKA, CDK5R1 (p35 form) and CDK5 and HIF1A. Interacts with the tRNA ligase SARS1; recruited to the VEGFA promoter via interaction with SARS1. Interacts with BEX4; negatively regulates alpha-tubulin deacetylation by SIRT2. The cofactor is Zn(2+). Post-translationally, phosphorylated at phosphoserine and phosphothreonine. Phosphorylated at Ser-330 by a mitotic kinase CDK1/cyclin B at the G2/M transition; phosphorylation regulates the delay in cell-cycle progression. Phosphorylated at Ser-330 by a mitotic kinase G1/S-specific cyclin E/Cdk2 complex; phosphorylation inactivates SIRT2-mediated alpha-tubulin deacetylation and thereby negatively regulates cell adhesion, cell migration and neurite outgrowth during neuronal differentiation. Phosphorylated by cyclin A/Cdk2 and p35-Cdk5 complexes and to a lesser extent by the cyclin D3/Cdk4 and cyclin B/Cdk1, in vitro. Dephosphorylated at Ser-330 by CDC14A and CDC14B around early anaphase. In terms of processing, acetylated by EP300; acetylation leads both to the decreased of SIRT2-mediated alpha-tubulin deacetylase activity and SIRT2-mediated down-regulation of TP53 transcriptional activity. Ubiquitinated. Expressed in the cerebellum, cerebral cortex and cervival spinal cord. Expressed in Purkinje cells, oligodendrocytes and Schwann cells (at protein level). Expressed in the central nervous system (CNS).

The protein resides in the nucleus. It is found in the cytoplasm. It localises to the perinuclear region. Its subcellular location is the cytoskeleton. The protein localises to the microtubule organizing center. The protein resides in the centrosome. It is found in the centriole. It localises to the spindle. Its subcellular location is the midbody. The protein localises to the chromosome. The protein resides in the perikaryon. It is found in the cell projection. It localises to the growth cone. Its subcellular location is the myelin membrane. The catalysed reaction is N(6)-acetyl-L-lysyl-[protein] + NAD(+) + H2O = 2''-O-acetyl-ADP-D-ribose + nicotinamide + L-lysyl-[protein]. It carries out the reaction N(6)-tetradecanoyl-L-lysyl-[protein] + NAD(+) + H2O = 2''-O-tetradecanoyl-ADP-D-ribose + nicotinamide + L-lysyl-[protein]. It catalyses the reaction N(6)-hexadecanoyl-L-lysyl-[protein] + NAD(+) + H2O = 2''-O-hexadecanoyl-ADP-D-ribose + nicotinamide + L-lysyl-[protein]. With respect to regulation, inhibited by Sirtinol, A3 and M15 small molecules. Inhibited by nicotinamide. Inhibited by a macrocyclic peptide inhibitor S2iL5. Inhibited by EP300-induced acetylation. NAD-dependent protein deacetylase, which deacetylates internal lysines on histone and alpha-tubulin as well as many other proteins such as key transcription factors. Participates in the modulation of multiple and diverse biological processes such as cell cycle control, genomic integrity, microtubule dynamics, cell differentiation, metabolic networks, and autophagy. Plays a major role in the control of cell cycle progression and genomic stability. Functions in the antephase checkpoint preventing precocious mitotic entry in response to microtubule stress agents, and hence allowing proper inheritance of chromosomes. Positively regulates the anaphase promoting complex/cyclosome (APC/C) ubiquitin ligase complex activity by deacetylating CDC20 and FZR1, then allowing progression through mitosis. Associates both with chromatin at transcriptional start sites (TSSs) and enhancers of active genes. Plays a role in cell cycle and chromatin compaction through epigenetic modulation of the regulation of histone H4 'Lys-20' methylation (H4K20me1) during early mitosis. Specifically deacetylates histone H4 at 'Lys-16' (H4K16ac) between the G2/M transition and metaphase enabling H4K20me1 deposition by KMT5A leading to ulterior levels of H4K20me2 and H4K20me3 deposition throughout cell cycle, and mitotic S-phase progression. Deacetylates KMT5A modulating KMT5A chromatin localization during the mitotic stress response. Also deacetylates histone H3 at 'Lys-57' (H3K56ac) during the mitotic G2/M transition. During oocyte meiosis progression, may deacetylate histone H4 at 'Lys-16' (H4K16ac) and alpha-tubulin, regulating spindle assembly and chromosome alignment by influencing microtubule dynamics and kinetochore function. Deacetylates histone H4 at 'Lys-16' (H4K16ac) at the VEGFA promoter and thereby contributes to regulate expression of VEGFA, a key regulator of angiogenesis. Deacetylates alpha-tubulin at 'Lys-40' and hence controls neuronal motility, oligodendroglial cell arbor projection processes and proliferation of non-neuronal cells. Phosphorylation at Ser-368 by a G1/S-specific cyclin E-CDK2 complex inactivates SIRT2-mediated alpha-tubulin deacetylation, negatively regulating cell adhesion, cell migration and neurite outgrowth during neuronal differentiation. Deacetylates PARD3 and participates in the regulation of Schwann cell peripheral myelination formation during early postnatal development and during postinjury remyelination. Involved in several cellular metabolic pathways. Plays a role in the regulation of blood glucose homeostasis by deacetylating and stabilizing phosphoenolpyruvate carboxykinase PCK1 activity in response to low nutrient availability. Acts as a key regulator in the pentose phosphate pathway (PPP) by deacetylating and activating the glucose-6-phosphate G6PD enzyme, and therefore, stimulates the production of cytosolic NADPH to counteract oxidative damage. Maintains energy homeostasis in response to nutrient deprivation as well as energy expenditure by inhibiting adipogenesis and promoting lipolysis. Attenuates adipocyte differentiation by deacetylating and promoting FOXO1 interaction to PPARG and subsequent repression of PPARG-dependent transcriptional activity. Plays a role in the regulation of lysosome-mediated degradation of protein aggregates by autophagy in neuronal cells. Deacetylates FOXO1 in response to oxidative stress or serum deprivation, thereby negatively regulating FOXO1-mediated autophagy. Deacetylates a broad range of transcription factors and co-regulators regulating target gene expression. Deacetylates transcriptional factor FOXO3 stimulating the ubiquitin ligase SCF(SKP2)-mediated FOXO3 ubiquitination and degradation. Deacetylates HIF1A and therefore promotes HIF1A degradation and inhibition of HIF1A transcriptional activity in tumor cells in response to hypoxia. Deacetylates RELA in the cytoplasm inhibiting NF-kappaB-dependent transcription activation upon TNF-alpha stimulation. Inhibits transcriptional activation by deacetylating p53/TP53 and EP300. Also deacetylates EIF5A. Functions as a negative regulator on oxidative stress-tolerance in response to anoxia-reoxygenation conditions. Plays a role as tumor suppressor. In addition to protein deacetylase activity, also has activity toward long-chain fatty acyl groups and mediates protein-lysine demyristoylation and depalmitoylation of target proteins, such as ARF6 and KRAS, thereby regulating their association with membranes. This is NAD-dependent protein deacetylase sirtuin-2 (Sirt2) from Rattus norvegicus (Rat).